The following is a 123-amino-acid chain: N(4)-acetylcytidine amidohydrolase (123 aa).

In terms of domain architecture, ASCH spans 6–101 (ITFYQRFEAD…EIIFWVIQFS (96 aa)). Lys21 serves as the catalytic Proton acceptor. Catalysis depends on Ser24, which acts as the Nucleophile. Glu74 acts as the Proton donor in catalysis.

The protein belongs to the N(4)-acetylcytidine amidohydrolase family.

It carries out the reaction N(4)-acetylcytidine + H2O = cytidine + acetate + H(+). The enzyme catalyses N(4)-acetyl-2'-deoxycytidine + H2O = 2'-deoxycytidine + acetate + H(+). It catalyses the reaction N(4)-acetylcytosine + H2O = cytosine + acetate + H(+). In terms of biological role, catalyzes the hydrolysis of N(4)-acetylcytidine (ac4C). The protein is N(4)-acetylcytidine amidohydrolase of Haemophilus influenzae (strain ATCC 51907 / DSM 11121 / KW20 / Rd).